The chain runs to 118 residues: Down syndrome critical region protein 4 (118 aa).

The segment at 1-39 (MSLIILTRDDEPRIFTPDSDAASPALHSTSPLPDPASAS) is disordered. A compositionally biased stretch (low complexity) spans 28-39 (STSPLPDPASAS).

Mainly expressed in placenta.

This Homo sapiens (Human) protein is Down syndrome critical region protein 4 (DSCR4).